The primary structure comprises 251 residues: B3 domain-containing protein REM7 (251 aa).

DNA-binding regions (TF-B3) lie at residues 11-103 (NSHF…LGPS) and 170-251 (CFVA…SRLN).

The protein localises to the nucleus. The chain is B3 domain-containing protein REM7 (REM7) from Arabidopsis thaliana (Mouse-ear cress).